We begin with the raw amino-acid sequence, 616 residues long: Methylmalonyl-CoA mutase small subunit (616 aa).

It belongs to the methylmalonyl-CoA mutase family. In terms of assembly, heterodimer of an alpha and a beta chain. Adenosylcob(III)alamin serves as cofactor.

The catalysed reaction is (R)-methylmalonyl-CoA = succinyl-CoA. The protein operates within metabolic intermediate metabolism; propanoyl-CoA degradation; succinyl-CoA from propanoyl-CoA: step 3/3. Its function is as follows. Catalyzes the isomerization of succinyl-CoA to methylmalonyl-CoA during synthesis of propionate from tricarboxylic acid-cycle intermediates. This conversion most likely represents an important source of building blocks for polyketide antibiotic biosynthesis. It is unable to catalyze the conversion of isobutyryl-CoA into N-butyryl-CoA. The protein is Methylmalonyl-CoA mutase small subunit (mutA) of Streptomyces virginiae (Streptomyces cinnamonensis).